The primary structure comprises 494 residues: Cheilanthifoline synthase (494 aa).

Residues 4 to 24 (TIWLIISTVIIVLGIAKFLLG) form a helical membrane-spanning segment. Heme is bound at residue Cys437.

It belongs to the cytochrome P450 family. Requires heme as cofactor. As to expression, expressed in roots and at lower levels in stems, leaves and plantlets.

It is found in the endoplasmic reticulum membrane. It carries out the reaction (S)-scoulerine + reduced [NADPH--hemoprotein reductase] + O2 = (S)-cheilanthifoline + oxidized [NADPH--hemoprotein reductase] + 2 H2O + H(+). Methylenedioxy bridge-forming cytochrome P450 involved in the biosynthesis of isoquinoline alkaloids. Converts (S)-scoulerine into (S)-cheilanthifoline, a precursor of sanguinarine. Catalyzes an oxidative reaction that does not incorporate oxygen into the product. This Argemone mexicana (Mexican prickly poppy) protein is Cheilanthifoline synthase.